The chain runs to 320 residues: tRNA N6-adenosine threonylcarbamoyltransferase (320 aa).

Fe cation contacts are provided by histidine 113 and histidine 117. Residues 143-147, aspartate 176, glycine 189, aspartate 193, and asparagine 281 contribute to the substrate site; that span reads VVSGG. Aspartate 305 contacts Fe cation.

This sequence belongs to the KAE1 / TsaD family. The cofactor is Fe(2+).

Its subcellular location is the cytoplasm. The catalysed reaction is L-threonylcarbamoyladenylate + adenosine(37) in tRNA = N(6)-L-threonylcarbamoyladenosine(37) in tRNA + AMP + H(+). Functionally, required for the formation of a threonylcarbamoyl group on adenosine at position 37 (t(6)A37) in tRNAs that read codons beginning with adenine. Is involved in the transfer of the threonylcarbamoyl moiety of threonylcarbamoyl-AMP (TC-AMP) to the N6 group of A37, together with TsaE and TsaB. TsaD likely plays a direct catalytic role in this reaction. This is tRNA N6-adenosine threonylcarbamoyltransferase from Mycoplasmoides gallisepticum (strain R(low / passage 15 / clone 2)) (Mycoplasma gallisepticum).